A 364-amino-acid polypeptide reads, in one-letter code: Spermidine/putrescine import ATP-binding protein PotA (364 aa).

Positions 5–235 constitute an ABC transporter domain; that stretch reads LSFKDVSKGF…PVNRFVADFI (231 aa). 37-44 contributes to the ATP binding site; sequence GPSGCGKT.

It belongs to the ABC transporter superfamily. Spermidine/putrescine importer (TC 3.A.1.11.1) family. In terms of assembly, the complex is composed of two ATP-binding proteins (PotA), two transmembrane proteins (PotB and PotC) and a solute-binding protein (PotD).

Its subcellular location is the cell membrane. It carries out the reaction ATP + H2O + polyamine-[polyamine-binding protein]Side 1 = ADP + phosphate + polyamineSide 2 + [polyamine-binding protein]Side 1.. Functionally, part of the ABC transporter complex PotABCD involved in spermidine/putrescine import. Responsible for energy coupling to the transport system. The polypeptide is Spermidine/putrescine import ATP-binding protein PotA (Staphylococcus epidermidis (strain ATCC 12228 / FDA PCI 1200)).